The following is a 987-amino-acid chain: Nuclear matrix constituent protein 1b (987 aa).

The segment at 1–25 is disordered; that stretch reads MASPRSAGGVGGGGGGGGGSGGAAA. The segment covering 8–24 has biased composition (gly residues); it reads GGVGGGGGGGGGSGGAA. 2 coiled-coil regions span residues 403 to 545 and 594 to 717; these read LAEL…ERRA and LSKI…DREA. Basic and acidic residues-rich tracts occupy residues 752 to 764 and 898 to 908; these read SDIN…HDNS and CKEHEYGDKGP. Disordered regions lie at residues 752–775 and 887–987; these read SDIN…FGRK and HDEA…FLIT. The span at 944 to 954 shows a compositional bias: polar residues; it reads ATVSATETSNV. Positions 956–973 are enriched in acidic residues; it reads GPEDNNDSDEEDEEEEEE.

Belongs to the CRWN family. As to quaternary structure, interacts with SWI3C.

It localises to the nucleus matrix. It is found in the nucleus lamina. Architectural component of nuclear structure that plays different roles in controlling nuclear size and morphology. Involved in the modification of chromatin accessibility by interacting with SWI3C, a component of the chromatin-remodeling complex, to thus reduce the suppression effect of the complex. Acts as positive regulator of drought resistance and modulates root growth. Positively regulates the expression of genes related to root growth and drought resistance. This chain is Nuclear matrix constituent protein 1b, found in Oryza sativa subsp. japonica (Rice).